A 505-amino-acid chain; its full sequence is Maturase K (505 aa).

Belongs to the intron maturase 2 family. MatK subfamily.

Its subcellular location is the plastid. The protein resides in the chloroplast. In terms of biological role, usually encoded in the trnK tRNA gene intron. Probably assists in splicing its own and other chloroplast group II introns. This chain is Maturase K, found in Chiococca alba (West Indian milkberry).